The following is a 129-amino-acid chain: Glycine cleavage system H protein (129 aa).

The Lipoyl-binding domain maps to 24-106 (TYTVGITEHA…YTDGWIFKIK (83 aa)). An N6-lipoyllysine modification is found at lysine 65.

This sequence belongs to the GcvH family. In terms of assembly, the glycine cleavage system is composed of four proteins: P, T, L and H. The cofactor is (R)-lipoate.

Its function is as follows. The glycine cleavage system catalyzes the degradation of glycine. The H protein shuttles the methylamine group of glycine from the P protein to the T protein. The chain is Glycine cleavage system H protein from Klebsiella pneumoniae subsp. pneumoniae (strain ATCC 700721 / MGH 78578).